The chain runs to 149 residues: MAKEFSRTRRIAQQLQQELAQVLQRDMKDPRIGFVTVNDVDVSRDLSYAKVFVTFFEEDKAVVQEKLNALISAAPYIRTLVAGRMKLRVMPELRFVYDSSLVEGMRMSNLVSQVINQDKAKQQQFGSADEVLNEDEGATDDTDDTKGKD.

The segment at 125–149 (FGSADEVLNEDEGATDDTDDTKGKD) is disordered. Positions 131-143 (VLNEDEGATDDTD) are enriched in acidic residues.

The protein belongs to the RbfA family. As to quaternary structure, monomer. Binds 30S ribosomal subunits, but not 50S ribosomal subunits or 70S ribosomes.

Its subcellular location is the cytoplasm. In terms of biological role, one of several proteins that assist in the late maturation steps of the functional core of the 30S ribosomal subunit. Associates with free 30S ribosomal subunits (but not with 30S subunits that are part of 70S ribosomes or polysomes). Required for efficient processing of 16S rRNA. May interact with the 5'-terminal helix region of 16S rRNA. This chain is Ribosome-binding factor A, found in Shewanella sp. (strain W3-18-1).